The primary structure comprises 114 residues: Large ribosomal subunit protein bL20c (114 aa).

This sequence belongs to the bacterial ribosomal protein bL20 family.

The protein resides in the plastid. It localises to the cyanelle. Functionally, binds directly to 23S ribosomal RNA and is necessary for the in vitro assembly process of the 50S ribosomal subunit. It is not involved in the protein synthesizing functions of that subunit. In Cyanophora paradoxa, this protein is Large ribosomal subunit protein bL20c (rpl20).